The sequence spans 307 residues: MPGTDDVAVDVASVYSAIEKSAGLLDVTAAREVVWPVLTAFEDVLEQAVIAFRVATNARHEGDFDVRFTVPEEVDPYAVALSRSLIAKTDHPVGSLLSDIQQLCSVDTYGVDLGVKSGFKKVWVYFPAGEHETLARLTGLTSMPGSLAGNVDFFTRYGLADKVDVIGIDYRSRTMNVYFAAPSECFERETVLAMHRDIGLPSPSEQMFKFCENSFGLYTTLNWDTMEIERISYGVKTENPMTFFARLGTKVEHFVKNVPYGVDTQKMVYAAVTSSGEEYYKLQSYYRWRSVSRLNAAYIAARDKEST.

This sequence belongs to the aromatic prenyltransferase family. In terms of assembly, monomer.

It catalyses the reaction 2-O,3-dimethylflaviolin + (2E)-geranyl diphosphate = 6-linalyl-2-O,3-dimethylflaviolin + diphosphate. The enzyme catalyses 2-O,3-dimethylflaviolin + (2E)-geranyl diphosphate + H(+) = 7-O-geranyl-2-O,3-dimethylflaviolin + diphosphate. Its activity is regulated as follows. Does not require any metal cations for activity. Its function is as follows. Involved in the biosynthesis of furaquinocin. Catalyzes the transfer of a geranyl group to 2-methoxy-3-methyl-flaviolin to yield 6-prenyl-2-methoxy-3-methyl-flaviolin and 7-O-geranyl-2-methoxy-3-methyl-flaviolin in a 10:1 ratio. Can also use other substrates such as flaviolin or 1,3-dihydroxy naphthalene, and can also use DMAPP as prenyl donor. The polypeptide is Furaquinocin biosynthesis prenyltransferase (Streptomyces sp. (strain KO-3988)).